The sequence spans 136 residues: Urease subunit beta (136 aa).

The interval 113-136 is disordered; the sequence is NDEYAGVFGDNGAENVNKKGGKRS.

It belongs to the urease beta subunit family. As to quaternary structure, heterotrimer of UreA (gamma), UreB (beta) and UreC (alpha) subunits. Three heterotrimers associate to form the active enzyme.

Its subcellular location is the cytoplasm. The enzyme catalyses urea + 2 H2O + H(+) = hydrogencarbonate + 2 NH4(+). The protein operates within nitrogen metabolism; urea degradation; CO(2) and NH(3) from urea (urease route): step 1/1. The polypeptide is Urease subunit beta (Staphylococcus aureus (strain USA300)).